The following is a 91-amino-acid chain: Small ribosomal subunit protein bS20 (91 aa).

A disordered region spans residues 1–28; it reads MANTASAEKRNRQAQKRRARNVQVRTGV.

It belongs to the bacterial ribosomal protein bS20 family.

Binds directly to 16S ribosomal RNA. The protein is Small ribosomal subunit protein bS20 of Anaeromyxobacter dehalogenans (strain 2CP-1 / ATCC BAA-258).